The primary structure comprises 271 residues: High mobility group protein homolog TDP-1 (271 aa).

The region spanning 8-63 is the DEK-C domain; the sequence is GPLPTDIEETVITIMREEGVRYITAKILRMRLESKYQMEFGPHKAAIDDIVARAMQ. The interval 75–118 is disordered; that stretch reads LKEKDASKSSGGKGSKRARSAGAEAPSKTKKEMTEKPKKPADYP. The segment covering 101–116 has biased composition (basic and acidic residues); sequence SKTKKEMTEKPKKPAD. DNA-binding regions (HMG box) lie at residues 118-186 and 206-270; these read PKPA…DEYK and PKRA…AALP.

It is found in the nucleus. Its function is as follows. Unknown. May play a role in transcription and/or DNA replication. It is not known whether this protein is DNA sequence binding-specific or not. This is High mobility group protein homolog TDP-1 from Trypanosoma brucei rhodesiense.